Reading from the N-terminus, the 145-residue chain is MNLTNYVKQVSVEDFGWEFRHQAYWNKRLRTTGGRFFPKDGHLDFNPKIYETFGLEIFRKIVRHELAHYHLYYQGKGYRHGDRDFKELLKQVDGLRYAPSLSNSQSFLVYECLSCGALIRRRRRVNLQKYRCGRCMGKLRLSEKA.

Residues 5–141 (NYVKQVSVED…CGRCMGKLRL (137 aa)) enclose the SprT-like domain. Histidine 64 is a Zn(2+) binding site. The active site involves glutamate 65. A Zn(2+)-binding site is contributed by histidine 68.

It belongs to the SprT family. Zn(2+) is required as a cofactor.

Its subcellular location is the cytoplasm. The sequence is that of Protein SprT-like from Streptococcus sanguinis (strain SK36).